We begin with the raw amino-acid sequence, 234 residues long: GTP cyclohydrolase 1 type 2 homolog (234 aa).

His-61, His-62, Asp-80, His-195, and Glu-199 together coordinate a divalent metal cation.

This sequence belongs to the GTP cyclohydrolase I type 2/NIF3 family. In terms of assembly, homohexamer.

This is GTP cyclohydrolase 1 type 2 homolog from Methanothermobacter thermautotrophicus (strain ATCC 29096 / DSM 1053 / JCM 10044 / NBRC 100330 / Delta H) (Methanobacterium thermoautotrophicum).